Here is a 147-residue protein sequence, read N- to C-terminus: Response regulator Rcp1 (147 aa).

One can recognise a Response regulatory domain in the interval 10–135 (VILLVEDSKA…DLFKMVQGIE (126 aa)). The residue at position 68 (D68) is a 4-aspartylphosphate.

Phosphorylated by Cph1.

Forms a two-component system with Cph1 in which it acts as receiver substrate. This is Response regulator Rcp1 (rcp1) from Synechocystis sp. (strain ATCC 27184 / PCC 6803 / Kazusa).